Here is a 472-residue protein sequence, read N- to C-terminus: MIKWTMINIYLLLMFLIIKNNNNNNNYNNITKYNKDMDLYSIQSPYIKNMNIIKRGYHTSLNNKLIIVQKDNKNNNKNNLEMDNFYKWLVGFTDGDGSFYIKLNDKKYLRFFYGFRMHIDDKACLEKIRNMLNMPSNFEETTKTIMLVNSQKKWLYSNIVTIFDKYPCLTIKYYSYYKWKMAMINNLNGMSYNNKDLLNIKNTINNYEVMPNLKIPYDKMNDYWILGFIEAEGSFDTSPKRNICGFNVSQHKRSINTLKAIKSYVLNNWKPIDNTPLLIKNKLLKDWDSSIKLTKPDKNGVIKLEFNRMDFLYYVILPKLYSLKWYSRKEIDFQLWKTTMEIYMKGLHNTTKGSNLLKLINNNINKKRYYSNYNISKNIIDDVLNMNTIYNYKLPYRMNSDIQRLNSMNNNNTKFINVGVFVYDLNNTLIMTFTGYRPAATYFNCSKHEIAKYIKNGNVFMNKYILKNILLD.

The protein resides in the mitochondrion. This is an uncharacterized protein from Saccharomyces cerevisiae (strain ATCC 204508 / S288c) (Baker's yeast).